Here is a 34-residue protein sequence, read N- to C-terminus: Photosystem II reaction center protein M (34 aa).

Residues 7 to 27 (GFVASLLFILVPAIFLIVLYI) traverse the membrane as a helical segment.

Belongs to the PsbM family. In terms of assembly, PSII is composed of 1 copy each of membrane proteins PsbA, PsbB, PsbC, PsbD, PsbE, PsbF, PsbH, PsbI, PsbJ, PsbK, PsbL, PsbM, PsbT, PsbX, PsbY, PsbZ, Psb30/Ycf12, peripheral proteins PsbO, CyanoQ (PsbQ), PsbU, PsbV and a large number of cofactors. It forms dimeric complexes.

The protein resides in the cellular thylakoid membrane. One of the components of the core complex of photosystem II (PSII). PSII is a light-driven water:plastoquinone oxidoreductase that uses light energy to abstract electrons from H(2)O, generating O(2) and a proton gradient subsequently used for ATP formation. It consists of a core antenna complex that captures photons, and an electron transfer chain that converts photonic excitation into a charge separation. This subunit is found at the monomer-monomer interface. This is Photosystem II reaction center protein M from Parasynechococcus marenigrum (strain WH8102).